Consider the following 659-residue polypeptide: Alpha-amylase (659 aa).

The signal sequence occupies residues 1–27 (MFAKRFKTSLLPLFAGFLLLFHLVLAG). Positions 28–41 (PAAASAETANKSNE) are excised as a propeptide. Ca(2+) contacts are provided by asparagine 142, threonine 178, aspartate 187, glycine 210, and aspartate 212. The Nucleophile role is filled by aspartate 217. Residue histidine 221 coordinates Ca(2+). Glutamate 249 functions as the Proton donor in the catalytic mechanism.

Belongs to the glycosyl hydrolase 13 family. Monomer. Ca(2+) is required as a cofactor.

It is found in the secreted. It carries out the reaction Endohydrolysis of (1-&gt;4)-alpha-D-glucosidic linkages in polysaccharides containing three or more (1-&gt;4)-alpha-linked D-glucose units.. The protein is Alpha-amylase (amyE) of Bacillus subtilis (strain 168).